Reading from the N-terminus, the 282-residue chain is Autophagy protein 5 (282 aa).

A Glycyl lysine isopeptide (Lys-Gly) (interchain with G-Cter in ATG12) cross-link involves residue K144.

This sequence belongs to the ATG5 family. Conjugated with ATG12. In terms of processing, conjugated to ATG12; which is essential for autophagy.

Its subcellular location is the preautophagosomal structure membrane. Involved in cytoplasm to vacuole transport (Cvt) and autophagic vesicle formation. Autophagy is essential for maintenance of amino acid levels and protein synthesis under nitrogen starvation. Required for selective autophagic degradation of the nucleus (nucleophagy). Also required for mitophagy, which eliminates defective or superfluous mitochondria in order to fulfill cellular energy requirements and prevent excess ROS production. Conjugation with ATG12, through a ubiquitin-like conjugating system involving ATG7 as an E1-like activating enzyme and ATG10 as an E2-like conjugating enzyme, is essential for its function. The ATG12-ATG5 conjugate acts as an E3-like enzyme which is required for lipidation of ATG8 and ATG8 association to the vesicle membranes. The polypeptide is Autophagy protein 5 (ATG5) (Scheffersomyces stipitis (strain ATCC 58785 / CBS 6054 / NBRC 10063 / NRRL Y-11545) (Yeast)).